The primary structure comprises 141 residues: MGLRRCTHFATLVMPLWALALFFLVVMQVPAQTTSLQISKEDRRLQELESKMGAESEQPNANLVGPSISRFGDRRNQKTISFGRRVPLISRPMIPIELDLLMDNDDERTKAKRFDDYGHMRFGKRGGDDQFDDYGHMRFGR.

The first 31 residues, 1 to 31 (MGLRRCTHFATLVMPLWALALFFLVVMQVPA), serve as a signal peptide directing secretion. Positions 32–73 (QTTSLQISKEDRRLQELESKMGAESEQPNANLVGPSISRFGD) are excised as a propeptide. A disordered region spans residues 49-69 (ESKMGAESEQPNANLVGPSIS). Position 82 is a phenylalanine amide (Phe-82). Residues 86–111 (VPLISRPMIPIELDLLMDNDDERTKA) constitute a propeptide that is removed on maturation. Tyr-117 carries the post-translational modification Sulfotyrosine. At Phe-122 the chain carries Phenylalanine amide. A Sulfotyrosine modification is found at Tyr-134. At Phe-139 the chain carries Phenylalanine amide.

It belongs to the gastrin/cholecystokinin family.

It localises to the secreted. Drosulfakinin-0 (DSK 0) plays diverse biological roles including regulating gut muscle contraction in adults but not in larvae. The polypeptide is Drosulfakinins (Drosophila erecta (Fruit fly)).